We begin with the raw amino-acid sequence, 233 residues long: 3-dehydroquinate dehydratase (233 aa).

3-dehydroquinate-binding positions include 39 to 41 and arginine 73; that span reads EIR. The active-site Proton donor/acceptor is the histidine 132. Lysine 159 (schiff-base intermediate with substrate) is an active-site residue. Residues arginine 196 and glutamine 219 each contribute to the 3-dehydroquinate site.

This sequence belongs to the type-I 3-dehydroquinase family. As to quaternary structure, homodimer.

The catalysed reaction is 3-dehydroquinate = 3-dehydroshikimate + H2O. It functions in the pathway metabolic intermediate biosynthesis; chorismate biosynthesis; chorismate from D-erythrose 4-phosphate and phosphoenolpyruvate: step 3/7. Functionally, involved in the third step of the chorismate pathway, which leads to the biosynthesis of aromatic amino acids. Catalyzes the cis-dehydration of 3-dehydroquinate (DHQ) and introduces the first double bond of the aromatic ring to yield 3-dehydroshikimate. This is 3-dehydroquinate dehydratase from Methanococcoides burtonii (strain DSM 6242 / NBRC 107633 / OCM 468 / ACE-M).